The chain runs to 91 residues: Small ribosomal subunit protein bS20 (91 aa).

It belongs to the bacterial ribosomal protein bS20 family.

Its function is as follows. Binds directly to 16S ribosomal RNA. In Acidithiobacillus ferrooxidans (strain ATCC 23270 / DSM 14882 / CIP 104768 / NCIMB 8455) (Ferrobacillus ferrooxidans (strain ATCC 23270)), this protein is Small ribosomal subunit protein bS20.